A 141-amino-acid polypeptide reads, in one-letter code: Large ribosomal subunit protein uL11 (141 aa).

The protein belongs to the universal ribosomal protein uL11 family. In terms of assembly, part of the ribosomal stalk of the 50S ribosomal subunit. Interacts with L10 and the large rRNA to form the base of the stalk. L10 forms an elongated spine to which L12 dimers bind in a sequential fashion forming a multimeric L10(L12)X complex. Post-translationally, one or more lysine residues are methylated.

Forms part of the ribosomal stalk which helps the ribosome interact with GTP-bound translation factors. In Cyanothece sp. (strain PCC 7425 / ATCC 29141), this protein is Large ribosomal subunit protein uL11.